Reading from the N-terminus, the 461-residue chain is mRNA cap guanine-N(7) methyltransferase (461 aa).

The interval 1 to 117 is disordered; it reads MESSVKASVD…RKLQPQDALE (117 aa). 4 positions are modified to phosphoserine: Ser11, Ser15, Ser16, and Ser58. Composition is skewed to polar residues over residues 14 to 29 and 49 to 58; these read ESSPGVNETAAASGQR and EQNSSYVQDS. A compositionally biased stretch (basic and acidic residues) spans 65-93; it reads LDVEIILDEKHSEDDGGASKRSKLERGGG. Phosphoserine occurs at positions 94 and 99. The Nuclear localization signal motif lies at 107 to 109; it reads KRK. The mRNA cap 0 methyltransferase domain occupies 152–460; that stretch reads SRIFYLRNFN…IYLVFAFEKQ (309 aa). Residue 161 to 162 participates in mRNA binding; sequence NN. S-adenosyl-L-methionine-binding residues include Lys165, Gly190, Asp212, Asp246, Gln269, and Tyr274.

Belongs to the class I-like SAM-binding methyltransferase superfamily. mRNA cap 0 methyltransferase family. In terms of assembly, interacts with importin alpha, leading to stimulate both RNA-binding and methyltransferase activity. Interaction with importin alpha and beta is required for its nuclear localization, importin beta dissociating in response to RanGTP, allowing RNMT-importin alpha to bind RNA substrates. Interacts with elongating form of polymerase II and RNGTT. Interacts with RAMAC, this interaction significantly enhances RNA-binding and cap methyltransferase activity.

The protein resides in the nucleus. The enzyme catalyses a 5'-end (5'-triphosphoguanosine)-ribonucleoside in mRNA + S-adenosyl-L-methionine = a 5'-end (N(7)-methyl 5'-triphosphoguanosine)-ribonucleoside in mRNA + S-adenosyl-L-homocysteine. Its activity is regulated as follows. Methyltransferase activity is activated by RAMAC. Catalytic subunit of the mRNA-capping methyltransferase RNMT:RAMAC complex that methylates the N7 position of the added guanosine to the 5'-cap structure of mRNAs. Binds RNA containing 5'-terminal GpppC. In Rattus norvegicus (Rat), this protein is mRNA cap guanine-N(7) methyltransferase (Rnmt).